Here is a 1328-residue protein sequence, read N- to C-terminus: Protein turtle homolog B (1328 aa).

A signal peptide spans 1–20 (MIWYVATLIASVISTRGLVA). Residues 21-722 (QVAHGLREEP…DLTDDGLARP (702 aa)) are Extracellular-facing. Ig-like domains are found at residues 30–115 (PEFV…ECKV), 139–226 (PTFT…LLVQ), 228–320 (PPFI…AYLT), 324–415 (PARV…ARLV), and 420–504 (PYFT…THLT). Intrachain disulfides connect Cys-45/Cys-113 and Cys-161/Cys-208. N-linked (GlcNAc...) asparagine glycosylation is found at Asn-241 and Asn-258. 3 disulfides stabilise this stretch: Cys-250–Cys-303, Cys-346–Cys-397, and Cys-442–Cys-488. Fibronectin type-III domains are found at residues 512–604 (APGS…TLAF) and 614–708 (LVTP…STDI). N-linked (GlcNAc...) asparagine glycosylation is present at Asn-624. The chain crosses the membrane as a helical span at residues 723–743 (VLAGIVATICFLAAAILFSTL). The Cytoplasmic segment spans residues 744-1328 (AACFVNKQRK…EPPTTLPTSG (585 aa)). Disordered stretches follow at residues 758–817 (RKKD…EKEL), 914–1040 (PMSS…PEPW), and 1107–1328 (SPGR…PTSG). Ser-775, Ser-783, and Ser-794 each carry phosphoserine. The segment covering 990 to 1001 (SPLSSVMSSPPL) has biased composition (low complexity). 3 stretches are compositionally biased toward polar residues: residues 1018–1033 (ENAS…TPTG), 1129–1141 (LVSQ…TSQG), and 1199–1214 (SRLS…SRTG). Omega-N-methylarginine is present on Arg-1136. Ser-1207 and Ser-1215 each carry phosphoserine. The span at 1246–1273 (SFSRKSTPSSTGSPSQSSRSGSPSYRPT) shows a compositional bias: low complexity. 2 stretches are compositionally biased toward pro residues: residues 1284–1295 (PSPPPGPAPPAP) and 1318–1328 (PEPPTTLPTSG).

This sequence belongs to the immunoglobulin superfamily. Turtle family. Found in a complex with MAGI2 and NLGN2, where it interacts with MAGI2 (via PDZ 5 and PDZ 6 domains). In terms of processing, N-glycosylated and sialylated. Not significantly O-glycosylated. Detected primarily in brain, including cortex, hippocampus, cerebellum and striatum. Largely restricted to inhibitory GABAergic interneurons (at protein level).

The protein resides in the postsynaptic cell membrane. Its subcellular location is the postsynaptic density. Transmembrane protein which is abundantly expressed in interneurons, where it may regulate inhibitory synapse development. May mediate homophilic cell adhesion. This Rattus norvegicus (Rat) protein is Protein turtle homolog B.